We begin with the raw amino-acid sequence, 145 residues long: Lipoprotein signal peptidase (145 aa).

A run of 2 helical transmembrane segments spans residues 57–77 (LFFIVITVVVGIVLIYSMIKL) and 79–99 (ENSLYNYTLAMILGGAIGNLI). Residues aspartate 109 and aspartate 124 contribute to the active site. The chain crosses the membrane as a helical span at residues 120–140 (FNVADSFIVVGAIILGYLMIF).

This sequence belongs to the peptidase A8 family.

It localises to the cell membrane. It carries out the reaction Release of signal peptides from bacterial membrane prolipoproteins. Hydrolyzes -Xaa-Yaa-Zaa-|-(S,diacylglyceryl)Cys-, in which Xaa is hydrophobic (preferably Leu), and Yaa (Ala or Ser) and Zaa (Gly or Ala) have small, neutral side chains.. The protein operates within protein modification; lipoprotein biosynthesis (signal peptide cleavage). Its function is as follows. This protein specifically catalyzes the removal of signal peptides from prolipoproteins. This is Lipoprotein signal peptidase from Caldanaerobacter subterraneus subsp. tengcongensis (strain DSM 15242 / JCM 11007 / NBRC 100824 / MB4) (Thermoanaerobacter tengcongensis).